The sequence spans 323 residues: PI-PLC X domain-containing protein 1 (323 aa).

The 177-residue stretch at 30–206 folds into the PI-PLC X-box domain; that stretch reads RLWDVPLHHL…QVIVSYEDES (177 aa).

As to expression, widely expressed.

It localises to the cytoplasm. The sequence is that of PI-PLC X domain-containing protein 1 (PLCXD1) from Homo sapiens (Human).